A 302-amino-acid polypeptide reads, in one-letter code: Transmembrane protein 191C (302 aa).

Disordered regions lie at residues 1–21 and 54–73; these read MAAT…GRQR and LRRR…EAAR. Positions 5-160 form a coiled coil; that stretch reads QELLLQLQKD…EKLQQDALQT (156 aa). Residues 238–258 traverse the membrane as a helical segment; sequence VLGALQVLLTLPLLFLGLSLL.

Belongs to the TMEM191 family.

It is found in the membrane. This chain is Transmembrane protein 191C, found in Homo sapiens (Human).